An 89-amino-acid chain; its full sequence is Small ribosomal subunit protein uS15 (89 aa).

It belongs to the universal ribosomal protein uS15 family. As to quaternary structure, part of the 30S ribosomal subunit. Forms a bridge to the 50S subunit in the 70S ribosome, contacting the 23S rRNA.

In terms of biological role, one of the primary rRNA binding proteins, it binds directly to 16S rRNA where it helps nucleate assembly of the platform of the 30S subunit by binding and bridging several RNA helices of the 16S rRNA. Functionally, forms an intersubunit bridge (bridge B4) with the 23S rRNA of the 50S subunit in the ribosome. The chain is Small ribosomal subunit protein uS15 from Corynebacterium efficiens (strain DSM 44549 / YS-314 / AJ 12310 / JCM 11189 / NBRC 100395).